A 64-amino-acid chain; its full sequence is uncharacterized protein (64 aa).

A helical transmembrane segment spans residues 30–52 (FYAIFEMLFWPLVSLISVGLLGE).

The protein localises to the membrane. This is an uncharacterized protein from Archaeoglobus fulgidus (strain ATCC 49558 / DSM 4304 / JCM 9628 / NBRC 100126 / VC-16).